The chain runs to 444 residues: Ribulose bisphosphate carboxylase (444 aa).

Lysine 163 functions as the Proton acceptor in the catalytic mechanism. Lysine 165 provides a ligand contact to substrate. 3 residues coordinate Mg(2+): lysine 189, aspartate 191, and glutamate 192. Lysine 189 is modified (N6-carboxylysine). The active-site Proton acceptor is histidine 281. Residues arginine 282, histidine 314, 367-369, and 389-392 contribute to the substrate site; these read SGG and QLGG.

Belongs to the RuBisCO large chain family. Type III subfamily. In terms of assembly, homodecamer, consisting of five dimer units which form a ring-like pentagonal structure. This arrangement is essential for its high thermostability. In contrast to form I RuBisCO, the form III RuBisCO is composed solely of large subunits. Mg(2+) is required as a cofactor.

It carries out the reaction 2 (2R)-3-phosphoglycerate + 2 H(+) = D-ribulose 1,5-bisphosphate + CO2 + H2O. It catalyses the reaction D-ribulose 1,5-bisphosphate + O2 = 2-phosphoglycolate + (2R)-3-phosphoglycerate + 2 H(+). Functionally, catalyzes the addition of molecular CO(2) and H(2)O to ribulose 1,5-bisphosphate (RuBP), generating two molecules of 3-phosphoglycerate (3-PGA). Functions in an archaeal AMP degradation pathway, together with AMP phosphorylase and R15P isomerase. In Thermococcus kodakarensis (strain ATCC BAA-918 / JCM 12380 / KOD1) (Pyrococcus kodakaraensis (strain KOD1)), this protein is Ribulose bisphosphate carboxylase.